The chain runs to 277 residues: Probable endonuclease 4 (277 aa).

Residues His-67, His-107, Glu-142, Asp-176, His-179, His-211, Asp-224, His-226, and Glu-256 each contribute to the Zn(2+) site.

This sequence belongs to the AP endonuclease 2 family. It depends on Zn(2+) as a cofactor.

It carries out the reaction Endonucleolytic cleavage to 5'-phosphooligonucleotide end-products.. Functionally, endonuclease IV plays a role in DNA repair. It cleaves phosphodiester bonds at apurinic or apyrimidinic (AP) sites, generating a 3'-hydroxyl group and a 5'-terminal sugar phosphate. This Akkermansia muciniphila (strain ATCC BAA-835 / DSM 22959 / JCM 33894 / BCRC 81048 / CCUG 64013 / CIP 107961 / Muc) protein is Probable endonuclease 4.